We begin with the raw amino-acid sequence, 124 residues long: Holo-[acyl-carrier-protein] synthase (124 aa).

Positions 5 and 56 each coordinate Mg(2+).

It belongs to the P-Pant transferase superfamily. AcpS family. The cofactor is Mg(2+).

The protein resides in the cytoplasm. It catalyses the reaction apo-[ACP] + CoA = holo-[ACP] + adenosine 3',5'-bisphosphate + H(+). In terms of biological role, transfers the 4'-phosphopantetheine moiety from coenzyme A to a Ser of acyl-carrier-protein. The protein is Holo-[acyl-carrier-protein] synthase of Campylobacter hominis (strain ATCC BAA-381 / DSM 21671 / CCUG 45161 / LMG 19568 / NCTC 13146 / CH001A).